Consider the following 173-residue polypeptide: T-complex protein 1 subunit alpha (173 aa).

The protein belongs to the TCP-1 chaperonin family. Component of the chaperonin-containing T-complex (TRiC), a heterooligomeric complex of about 850 to 900 kDa that forms two stacked rings, 12 to 16 nm in diameter.

It localises to the cytoplasm. The protein resides in the cytosol. In terms of biological role, component of the chaperonin-containing T-complex (TRiC), a molecular chaperone complex that assists the folding of proteins upon ATP hydrolysis. In Ambystoma mexicanum (Axolotl), this protein is T-complex protein 1 subunit alpha.